We begin with the raw amino-acid sequence, 68 residues long: Kasstasin (68 aa).

The N-terminal stretch at 1-20 (MMKKSMLLLFFLGMVSFSLA) is a signal peptide. A propeptide spanning residues 21 to 44 (DDKREDEGEEKRADEGEEKRAAEE) is cleaved from the precursor. The disordered stretch occupies residues 22-41 (DKREDEGEEKRADEGEEKRA). Lys67 carries the post-translational modification Lysine amide.

The protein belongs to the frog skin active peptide (FSAP) family. Brevinin subfamily. In terms of tissue distribution, expressed by the skin dorsal glands.

The protein resides in the secreted. Peptide with potent vasoconstrictor properties (EC50=25 pM). Has moderate antimicrobial activity against Gram-positive bacterium S.aureus (MIC=55 uM) and against Gram-negative bacterium E.coli (MIC=110 uM). Not active against fungus C.albicans. Has weak hemolytic activity against horse erythrocytes. The chain is Kasstasin from Phlyctimantis maculatus (Red-legged running frog).